The primary structure comprises 1613 residues: THO complex subunit 2 (1613 aa).

Coiled-coil stretches lie at residues 293-339 (NSIM…KVEK) and 896-965 (HTSY…NWLL). Positions 923–928 (KKKKEK) match the Nuclear localization signal motif. The tract at residues 1182–1586 (PENEFHNKDP…GGKEEKKQYP (405 aa)) is disordered. Basic and acidic residues predominate over residues 1218 to 1234 (KSDESSTEETDKSRERS). Ser-1222 is subject to Phosphoserine. The segment covering 1251–1262 (GNSSNGNSGSNS) has biased composition (low complexity). Basic and acidic residues-rich tracts occupy residues 1264–1284 (AVKE…KEKT), 1293–1342 (VLGK…EKFK), and 1352–1382 (STQE…KGGE). Thr-1384 is modified (phosphothreonine). A phosphoserine mark is found at Ser-1389, Ser-1392, and Ser-1416. Residues 1415–1424 (PSPSHSSTVK) show a composition bias toward polar residues. Thr-1442 is modified (phosphothreonine). Basic and acidic residues predominate over residues 1448-1503 (KSKEREMDKKDLDKSRERSREREKKDEKDRKERKRDHSNNDREVPPDLTKRRKEEN). Residues Ser-1449, Ser-1485, and Ser-1515 each carry the phosphoserine modification. A coiled-coil region spans residues 1464–1491 (ERSREREKKDEKDRKERKRDHSNNDREV). A compositionally biased stretch (basic and acidic residues) spans 1523 to 1584 (NEKDKEKNKS…SSGGKEEKKQ (62 aa)).

The protein belongs to the THOC2 family. In terms of assembly, component of the THO subcomplex, which is composed of THOC1, THOC2, THOC3, THOC5, THOC6 and THOC7. The THO subcomplex interacts with DDX39B to form the THO-DDX39B complex which multimerizes into a 28-subunit tetrameric assembly. Component of the transcription/export (TREX) complex at least composed of ALYREF/THOC4, DDX39B, SARNP/CIP29, CHTOP and the THO subcomplex; in the complex interacts with THOC1, THOC3, THOC5, THOC7 and DDX39B. TREX seems to have a dynamic structure involving ATP-dependent remodeling. Interacts with POLDIP3 and ZC3H11A.

It is found in the nucleus. The protein resides in the nucleus speckle. Its subcellular location is the cytoplasm. Its function is as follows. Component of the THO subcomplex of the TREX complex which is thought to couple mRNA transcription, processing and nuclear export, and which specifically associates with spliced mRNA and not with unspliced pre-mRNA. Required for efficient export of polyadenylated RNA and spliced mRNA. The THOC1-THOC2-THOC3 core complex alone is sufficient to bind export factor NXF1-NXT1 and promote ATPase activity of DDX39B; in the complex THOC2 is the only component that directly interacts with DDX39B. TREX is recruited to spliced mRNAs by a transcription-independent mechanism, binds to mRNA upstream of the exon-junction complex (EJC) and is recruited in a splicing- and cap-dependent manner to a region near the 5' end of the mRNA where it functions in mRNA export to the cytoplasm via the TAP/NXF1 pathway. Required for NXF1 localization to the nuclear rim. THOC2 (and probably the THO complex) is involved in releasing mRNA from nuclear speckle domains. Plays a role for proper neuronal development. This Dasypus novemcinctus (Nine-banded armadillo) protein is THO complex subunit 2 (THOC2).